We begin with the raw amino-acid sequence, 332 residues long: 4-hydroxyproline 2-epimerase 2 (332 aa).

C89 serves as the catalytic Proton acceptor. Substrate-binding positions include H222, D248, and 253–254 (GT).

This sequence belongs to the proline racemase family.

The catalysed reaction is trans-4-hydroxy-L-proline = cis-4-hydroxy-D-proline. Its function is as follows. Catalyzes the epimerization of trans-4-hydroxy-L-proline (t4LHyp) to cis-4-hydroxy-D-proline (c4DHyp). Is likely involved in a degradation pathway that converts t4LHyp to alpha-ketoglutarate. Displays no proline racemase activity. This is 4-hydroxyproline 2-epimerase 2 from Rhizobium rhizogenes (strain K84 / ATCC BAA-868) (Agrobacterium radiobacter).